We begin with the raw amino-acid sequence, 127 residues long: Alpha-hordothionin (127 aa).

A signal peptide spans 1–18; it reads MVCLLILGLVLEQVQVEG. Cystine bridges form between C21/C57, C22/C49, C30/C47, and C34/C43. A propeptide spans 64-127 (acidic domain); it reads LALVSNSDEP…GDAGLTSLTA (64 aa).

This sequence belongs to the plant thionin (TC 1.C.44) family. 4 C-C subfamily.

It localises to the secreted. Functionally, thionins are small plant proteins which are toxic to animal cells. They seem to exert their toxic effect at the level of the cell membrane. Their precise function is not known. This is Alpha-hordothionin (THI1.1) from Hordeum vulgare (Barley).